A 2148-amino-acid chain; its full sequence is General transcription factor 3C polypeptide 1 (2148 aa).

Residues 473 to 487 (GEEAFLSDSESEEES) show a composition bias toward acidic residues. Disordered regions lie at residues 473–568 (GEEA…FDPH) and 587–609 (NPKEGGGSQKGGRHGSGQDKPHK). Basic residues predominate over residues 491–502 (GKRRGRGSRGHS). Residue Lys533 forms a Glycyl lysine isopeptide (Lys-Gly) (interchain with G-Cter in SUMO2) linkage. Ser666 is subject to Phosphoserine. 2 disordered regions span residues 717 to 771 (STAN…EKMG) and 818 to 863 (TGEQ…SSWE). 2 stretches are compositionally biased toward basic and acidic residues: residues 759-770 (ESTRVKKTDEKM) and 825-835 (HSERKTGKQEP). Glycyl lysine isopeptide (Lys-Gly) (interchain with G-Cter in SUMO2) cross-links involve residues Lys769 and Lys832. At Ser1062 the chain carries Phosphoserine. Basic and acidic residues predominate over residues 1186-1195 (EHFELDREPT). Disordered regions lie at residues 1186 to 1238 (EHFE…KKLR), 1597 to 1627 (KSLGKDGGLDDDDEEEDLDEGSGTKRQSVEV), 1823 to 1881 (KASG…LPAK), 1893 to 1928 (SPRPGTEEQTEAQAQFAAPEDAGAEGPRQESQESVG), and 2127 to 2148 (PRPSHSCYQSSAQPSTGVATSR). Thr1195 carries the phosphothreonine modification. Basic residues predominate over residues 1198 to 1214 (RNRKVRGGKSQKRKRLK). The segment covering 1228 to 1238 (EHPEAKSKKLR) has biased composition (basic and acidic residues). Over residues 1605 to 1616 (LDDDDEEEDLDE) the composition is skewed to acidic residues. Ser1624, Ser1853, and Ser1893 each carry phosphoserine. The span at 1903-1912 (EAQAQFAAPE) shows a compositional bias: low complexity. Positions 2132 to 2148 (SCYQSSAQPSTGVATSR) are enriched in polar residues.

The protein belongs to the TFIIIC subunit 1 family. In terms of assembly, part of the TFIIIC subcomplex TFIIIC2, consisting of six subunits, GTF3C1, GTF3C2, GTF3C3, GTF3C4, GTF3C5 and GTF3C6. Interacts with IGHMBP2. Interacts with MAF1.

It is found in the nucleus. In terms of biological role, required for RNA polymerase III-mediated transcription. Component of TFIIIC that initiates transcription complex assembly on tRNA and is required for transcription of 5S rRNA and other stable nuclear and cytoplasmic RNAs. Binds to the box B promoter element. This chain is General transcription factor 3C polypeptide 1 (Gtf3c1), found in Rattus norvegicus (Rat).